The following is a 1018-amino-acid chain: Fibronectin-binding protein A (1018 aa).

The signal sequence occupies residues 1–36; that stretch reads MKNNLRYGIRKHKLGAASVFLGTMIVVGMGQDKEAA. A YSIRK-G/S signaling motif motif is present at residues 7–18; sequence YGIRKHKLGAAS. Positions 37–511 are ligand-binding A region; the sequence is ASEQKTTTVE…SNKANGNEKN (475 aa). Disordered regions lie at residues 38 to 61 and 78 to 195; these read SEQK…SETQ and ATVT…ETGT. Polar residues-rich tracts occupy residues 39–61 and 78–92; these read EQKT…SETQ and ATVT…QVTT. Residues 112-126 are compositionally biased toward basic and acidic residues; sequence TVKEEVVKEEAKPQV. Over residues 129–139 the composition is skewed to polar residues; the sequence is TTQSQDNSGDQ. The interval 194 to 511 is fibrinogen/elastin/tropoelastin-binding; it reads GTDVTSKVTV…SNKANGNEKN (318 aa). The interval 512–872 is fibronectin-binding; sequence GPIIQNNKFE…EGQQTIEEDT (361 aa). A B-1 repeat occupies 545 to 574; the sequence is EEYDSSTLDIDYHTAIDGGGGYVDGYIETI. The interval 545–604 is 2 X approximate tandem repeats; it reads EEYDSSTLDIDYHTAIDGGGGYVDGYIETIEETDSSAIDIDYHTAVDSEAGHVGGYTESS. Residues 575–604 form a B-2 repeat; it reads EETDSSAIDIDYHTAVDSEAGHVGGYTESS. 3 disordered regions span residues 595 to 622, 740 to 813, and 827 to 997; these read GHVG…NSKH, LGYE…DIDF, and EIIE…GMLF. A D-1 repeat occupies 745 to 782; sequence GQNSGNQSFEEDTEEDKPKYEQGGNIVDIDFDSVPQIH. Residues 745 to 878 form a 4 X approximate tandem repeats, D-3 repeat has more fibronectin-binding activity region; sequence GQNSGNQSFE…EEDTTPPIVP (134 aa). A D-2 repeat occupies 783–820; the sequence is GQNKGNQSFEEDTEKDKPKYEHGGNIIDIDFDSVPHIH. The stretch at 821–859 is one D-3 repeat; it reads GFNKHTEIIEEDTNKDKPSYQFGGHNSVDFEEDTLPKVS. A compositionally biased stretch (basic and acidic residues) spans 827-838; the sequence is EIIEEDTNKDKP. The stretch at 860–878 is one D-4; truncated repeat; it reads GQNEGQQTIEEDTTPPIVP. Residues 875–938 are compositionally biased toward pro residues; sequence PIVPPTPPTP…PAEPGKPVPP (64 aa). 5 WR repeats span residues 879 to 892, 893 to 906, 907 to 920, 921 to 934, and 935 to 948; these read PTPP…EPET, PTPP…EPGK, and PVPP…KPSK. The interval 879–948 is 5 X tandem repeats, Pro-rich (WR); that stretch reads PTPPTPEVPS…AKEEPKKPSK (70 aa). Residues 982–986 carry the LPXTG sorting signal motif; the sequence is LPETG. At Thr-985 the chain carries Pentaglycyl murein peptidoglycan amidated threonine. Residues 986–1018 constitute a propeptide, removed by sortase; the sequence is GGEESTNKGMLFGGLFSILGLALLRRNKKNHKA.

It is found in the secreted. Its subcellular location is the cell wall. Possesses multiple, substituting fibronectin (Fn) binding regions, each capable of conferring adherence to both soluble and immobilized forms of Fn. This confers to S.aureus the ability to invade endothelial cells both in vivo and in vitro, without requiring additional factors, although in a slow and inefficient way through actin rearrangements in host cells. This invasion process is mediated by integrin alpha-5/beta-1. Promotes bacterial attachment to both soluble and immobilized forms of fibrinogen (Fg) by means of a unique binding site localized within the 17 C-terminal residues of the gamma-chain of human Fg. Both plasma proteins (Fn and Fg) function as a bridge between bacterium and host cell. Promotes attachment to immobilized elastin peptides in a dose-dependent and saturable manner. Promotes attachment to both full-length and segments of immobilized human tropoelastin at multiple sites in a dose and pH-dependent manner. Promotes adherence to and aggregation of activated platelets independently of other S.aureus surface molecules. Is a critical mediator implicated in the induction of experimental endocarditis in rats with catheter-induced aortic vegetations, promoting both colonization and persistence of the bacterium into the host. The polypeptide is Fibronectin-binding protein A (fnbA) (Staphylococcus aureus (strain NCTC 8325 / PS 47)).